A 664-amino-acid chain; its full sequence is Phosphomethylpyrimidine synthase (664 aa).

Substrate is bound by residues Asn235, Met264, Tyr293, His329, 349 to 351, 390 to 393, and Glu429; these read SRG and DGMR. His433 provides a ligand contact to Zn(2+). Tyr456 lines the substrate pocket. His497 provides a ligand contact to Zn(2+). Cys577, Cys580, and Cys585 together coordinate [4Fe-4S] cluster.

Belongs to the ThiC family. As to quaternary structure, homodimer. [4Fe-4S] cluster is required as a cofactor.

The catalysed reaction is 5-amino-1-(5-phospho-beta-D-ribosyl)imidazole + S-adenosyl-L-methionine = 4-amino-2-methyl-5-(phosphooxymethyl)pyrimidine + CO + 5'-deoxyadenosine + formate + L-methionine + 3 H(+). It functions in the pathway cofactor biosynthesis; thiamine diphosphate biosynthesis. Functionally, catalyzes the synthesis of the hydroxymethylpyrimidine phosphate (HMP-P) moiety of thiamine from aminoimidazole ribotide (AIR) in a radical S-adenosyl-L-methionine (SAM)-dependent reaction. The sequence is that of Phosphomethylpyrimidine synthase from Shewanella amazonensis (strain ATCC BAA-1098 / SB2B).